We begin with the raw amino-acid sequence, 173 residues long: MKYGIVLFPSKCIQDFANSYRKRYDSHYALIPPHITLKYPFEANEGQLKEMTKELHRIAAETPPIPIKVTKFSSFYPTSNIIYLKVEQNDVLKHLHEQLHSGLFAGKPEFAFVPHITIGRDLPGAEYADVYSQVKLQHVHFEETIDRFHLLYQLENGSWTVYDTFVVGGKETV.

Residue His34 is the Proton donor of the active site. 2 consecutive short sequence motifs (HXTX) follow at residues 34-37 (HITL) and 115-118 (HITI). His115 functions as the Proton acceptor in the catalytic mechanism.

Belongs to the 2H phosphoesterase superfamily. YjcG family.

The sequence is that of Putative phosphoesterase GTNG_0743 from Geobacillus thermodenitrificans (strain NG80-2).